The chain runs to 829 residues: MNLYESMNPTAQRIHELTDLLNRYAYEYYTLDAPSIPDAEYDRLFRELEALERNHPELKLPDSPTQRVGGEPLAGFAEVRHEVPMLSLTNAFSPQDENGVFDHAEMYAFDQRVRDGLDGGNPEYVIEPKFDGLAISLLYRDGVLVQAATRGDGTTGEDVTRNVKTVSNIPLRLHGENVPELIEVRGEVLMLKADFAALNQRQTENGQKPFANPRNAAAGSLRQLDSRITAQRKLHFFPYSVARQQGGLIAEEHIQELAYFQALGFSLPNGNFGCFKNIGEVLAFYEHMQQKRPELPYEIDGTVVKVNSLAQQHELGFISRAPRWAVAHKFPAEEALTIVEAIDVQIGRTGAVTPVARLQPVFVGGVTVTNATLHNQDEVSRKDVRVGDTVVVRRAGDVIPEVVRVIFERRPMQETAVAVSDGIGHQQDDLFAETPSAKQTESVPLHKPYRLPARCPICRSEIEREEGEAVARCSGGMLCQAQRAQGLIHFASRKAMDIDGLGEKQIEQLVAQDLVRHFADLYRIDIPTLQKMKETADKGSSENENGDAETVSGDLSKYNTQNGKKQPTKWAQNILAGIESGKTPELARFLFALGIRHVGERTAKTLAQAFGTLERVRRAPEPVLACLPDIGTVVARSIAHFFAQAEQQAMIDELLAAGVAPQAQAVSLPAAQYAGPQRWITRLPGFKISENKAQALWELAGQSIEGLQNDKALPADWQAWRSKAQNTALLENLKTFFAQMPSEDEAAQGSDGINKAVAGKTFVLTGTLPTFKRDQAQALIEAAGGKVSGSVSKKTDYVVAGETAGSKLEKANALGVSVLSEAELLTLLC.

Residues 38–42, 87–88, and Glu-127 each bind NAD(+); these read DAEYD and SL. Catalysis depends on Lys-129, which acts as the N6-AMP-lysine intermediate. Arg-150, Glu-187, Lys-305, and Lys-329 together coordinate NAD(+). Positions 455, 458, 473, and 479 each coordinate Zn(2+). A disordered region spans residues 534–564; the sequence is ETADKGSSENENGDAETVSGDLSKYNTQNGK. The 78-residue stretch at 752–829 folds into the BRCT domain; that stretch reads GINKAVAGKT…SEAELLTLLC (78 aa).

Belongs to the NAD-dependent DNA ligase family. LigA subfamily. Requires Mg(2+) as cofactor. Mn(2+) serves as cofactor.

It catalyses the reaction NAD(+) + (deoxyribonucleotide)n-3'-hydroxyl + 5'-phospho-(deoxyribonucleotide)m = (deoxyribonucleotide)n+m + AMP + beta-nicotinamide D-nucleotide.. Its function is as follows. DNA ligase that catalyzes the formation of phosphodiester linkages between 5'-phosphoryl and 3'-hydroxyl groups in double-stranded DNA using NAD as a coenzyme and as the energy source for the reaction. It is essential for DNA replication and repair of damaged DNA. The sequence is that of DNA ligase from Neisseria gonorrhoeae (strain ATCC 700825 / FA 1090).